The sequence spans 606 residues: Lysosomal cobalamin transporter ABCD4 (606 aa).

The ABC transmembrane type-1 domain maps to 39-332 (NVLMFMTLLC…CFTQLIDLST (294 aa)). The next 5 helical transmembrane spans lie at 43-63 (FMTL…VGLI), 76-96 (LDGF…NSTL), 190-210 (IFGY…PIVT), 279-299 (YLGS…GVYG), and 314-334 (AFVC…STTL). One can recognise an ABC transporter domain in the interval 389–603 (LDRVSILAPS…GGGSWELTRI (215 aa)). Residue 421–428 (GNTGTGKT) coordinates ATP.

Belongs to the ABC transporter superfamily. ABCD family. Peroxisomal fatty acyl CoA transporter (TC 3.A.1.203) subfamily. Homodimer or heterodimer. Interacts with LMBRD1; this interaction induces the translocation of ABCD4 from the ER to the lysosome membrane. Interacts with LMBRD1 and MMACHC; this interaction ensures the transport of cobalamin from the lysosome to the cytosol.

Its subcellular location is the endoplasmic reticulum membrane. The protein localises to the lysosome membrane. The catalysed reaction is an R-cob(III)alamin(out) + ATP + H2O = an R-cob(III)alamin(in) + ADP + phosphate + H(+). Its function is as follows. Lysosomal membrane protein that transports cobalamin (Vitamin B12) from the lysosomal lumen to the cytosol in an ATP-dependent manner. Targeted by LMBRD1 lysosomal chaperone from the endoplasmic reticulum to the lysosomal membrane. Then forms a complex with lysosomal chaperone LMBRD1 and cytosolic MMACHC to transport cobalamin across the lysosomal membrane. The polypeptide is Lysosomal cobalamin transporter ABCD4 (Mus musculus (Mouse)).